Reading from the N-terminus, the 194-residue chain is Imidazoleglycerol-phosphate dehydratase (194 aa).

This sequence belongs to the imidazoleglycerol-phosphate dehydratase family.

Its subcellular location is the cytoplasm. The enzyme catalyses D-erythro-1-(imidazol-4-yl)glycerol 3-phosphate = 3-(imidazol-4-yl)-2-oxopropyl phosphate + H2O. It participates in amino-acid biosynthesis; L-histidine biosynthesis; L-histidine from 5-phospho-alpha-D-ribose 1-diphosphate: step 6/9. The protein is Imidazoleglycerol-phosphate dehydratase of Thermoanaerobacter pseudethanolicus (strain ATCC 33223 / 39E) (Clostridium thermohydrosulfuricum).